The chain runs to 428 residues: tRNA(Ile)-lysidine synthase (428 aa).

28–33 lines the ATP pocket; sequence SGGVDS.

This sequence belongs to the tRNA(Ile)-lysidine synthase family.

The protein resides in the cytoplasm. The enzyme catalyses cytidine(34) in tRNA(Ile2) + L-lysine + ATP = lysidine(34) in tRNA(Ile2) + AMP + diphosphate + H(+). Ligates lysine onto the cytidine present at position 34 of the AUA codon-specific tRNA(Ile) that contains the anticodon CAU, in an ATP-dependent manner. Cytidine is converted to lysidine, thus changing the amino acid specificity of the tRNA from methionine to isoleucine. The chain is tRNA(Ile)-lysidine synthase from Streptococcus pyogenes serotype M6 (strain ATCC BAA-946 / MGAS10394).